The sequence spans 544 residues: CTP synthase (544 aa).

The tract at residues 1-265 (MTKFIFVTGG…DNIITEQLQL (265 aa)) is amidoligase domain. CTP is bound at residue Ser13. Ser13 serves as a coordination point for UTP. ATP contacts are provided by residues 14–19 (SLGKGI) and Asp71. Asp71 and Glu139 together coordinate Mg(2+). Residues 146 to 148 (DIE), 186 to 191 (KTKPTQ), and Lys222 each bind CTP. UTP contacts are provided by residues 186-191 (KTKPTQ) and Lys222. The 255-residue stretch at 290–544 (KIAMVGKYVD…VKAALNNKKA (255 aa)) folds into the Glutamine amidotransferase type-1 domain. Residue Gly353 participates in L-glutamine binding. Cys380 functions as the Nucleophile; for glutamine hydrolysis in the catalytic mechanism. Residues 381 to 384 (LGMQ), Glu404, and Arg471 each bind L-glutamine. Active-site residues include His517 and Glu519.

The protein belongs to the CTP synthase family. In terms of assembly, homotetramer.

The enzyme catalyses UTP + L-glutamine + ATP + H2O = CTP + L-glutamate + ADP + phosphate + 2 H(+). The catalysed reaction is L-glutamine + H2O = L-glutamate + NH4(+). It catalyses the reaction UTP + NH4(+) + ATP = CTP + ADP + phosphate + 2 H(+). It functions in the pathway pyrimidine metabolism; CTP biosynthesis via de novo pathway; CTP from UDP: step 2/2. With respect to regulation, allosterically activated by GTP, when glutamine is the substrate; GTP has no effect on the reaction when ammonia is the substrate. The allosteric effector GTP functions by stabilizing the protein conformation that binds the tetrahedral intermediate(s) formed during glutamine hydrolysis. Inhibited by the product CTP, via allosteric rather than competitive inhibition. In terms of biological role, catalyzes the ATP-dependent amination of UTP to CTP with either L-glutamine or ammonia as the source of nitrogen. Regulates intracellular CTP levels through interactions with the four ribonucleotide triphosphates. The chain is CTP synthase from Neisseria gonorrhoeae (strain ATCC 700825 / FA 1090).